The sequence spans 460 residues: Chromosomal replication initiator protein DnaA (460 aa).

The tract at residues 1–84 (MAVSLWQQCI…RFDIGSRPSA (84 aa)) is domain I, interacts with DnaA modulators. The domain II stretch occupies residues 84–123 (AKKPEPAPVAAVRVPNPQTKASVGTSFNTTEPVANTNHRS). Residues 103–123 (KASVGTSFNTTEPVANTNHRS) are disordered. The domain III, AAA+ region stretch occupies residues 124–340 (NINPTYQFDN…GALNRVIANA (217 aa)). Gly168, Gly170, Lys171, and Thr172 together coordinate ATP. A domain IV, binds dsDNA region spans residues 341-460 (NFTGRPITID…YANLIRTLSS (120 aa)).

It belongs to the DnaA family. As to quaternary structure, oligomerizes as a right-handed, spiral filament on DNA at oriC.

It localises to the cytoplasm. Its function is as follows. Plays an essential role in the initiation and regulation of chromosomal replication. ATP-DnaA binds to the origin of replication (oriC) to initiate formation of the DNA replication initiation complex once per cell cycle. Binds the DnaA box (a 9 base pair repeat at the origin) and separates the double-stranded (ds)DNA. Forms a right-handed helical filament on oriC DNA; dsDNA binds to the exterior of the filament while single-stranded (ss)DNA is stabiized in the filament's interior. The ATP-DnaA-oriC complex binds and stabilizes one strand of the AT-rich DNA unwinding element (DUE), permitting loading of DNA polymerase. After initiation quickly degrades to an ADP-DnaA complex that is not apt for DNA replication. Binds acidic phospholipids. The polypeptide is Chromosomal replication initiator protein DnaA (Shewanella sp. (strain MR-4)).